Reading from the N-terminus, the 136-residue chain is Transcription antitermination protein NusB (136 aa).

The protein belongs to the NusB family.

Its function is as follows. Involved in transcription antitermination. Required for transcription of ribosomal RNA (rRNA) genes. Binds specifically to the boxA antiterminator sequence of the ribosomal RNA (rrn) operons. The protein is Transcription antitermination protein NusB of Treponema denticola (strain ATCC 35405 / DSM 14222 / CIP 103919 / JCM 8153 / KCTC 15104).